The sequence spans 537 residues: Multidrug resistance protein Stp (537 aa).

14 helical membrane passes run 6 to 26, 46 to 66, 77 to 97, 104 to 124, 136 to 156, 163 to 183, 200 to 220, 223 to 243, 262 to 282, 300 to 320, 327 to 347, 352 to 372, 397 to 417, and 478 to 498; these read LLTL…ALIV, WVVA…ATLA, IGVS…SIAV, AQGL…SAAF, IWTA…GLLV, SIFY…LCYV, LLFI…PQIG, SVQT…FVWL, YALA…MLLL, LMIL…GHLV, VPIL…IFSE, ALVL…LTPI, AIGS…WLSA, and VALL…WRWF.

It belongs to the major facilitator superfamily. EmrB family.

It is found in the cell membrane. In Mycobacterium tuberculosis (strain CDC 1551 / Oshkosh), this protein is Multidrug resistance protein Stp (stp).